The chain runs to 189 residues: Movement protein (189 aa).

Belongs to the tombusvirus/aureusvirus movement protein p22 family. In terms of assembly, interacts with host protein HFI22. Phosphorylated.

The protein localises to the host membrane. In terms of biological role, transports viral genome to neighboring plant cells directly through plasmosdesmata, without any budding. The movement protein allows efficient cell to cell propagation, by bypassing the host cell wall barrier. This is Movement protein from Capsicum annuum (Capsicum pepper).